A 115-amino-acid chain; its full sequence is Large ribosomal subunit protein bL20 (115 aa).

The protein belongs to the bacterial ribosomal protein bL20 family.

In terms of biological role, binds directly to 23S ribosomal RNA and is necessary for the in vitro assembly process of the 50S ribosomal subunit. It is not involved in the protein synthesizing functions of that subunit. This Parasynechococcus marenigrum (strain WH8102) protein is Large ribosomal subunit protein bL20.